The following is a 389-amino-acid chain: Phospho-N-acetylmuramoyl-pentapeptide-transferase (389 aa).

Transmembrane regions (helical) follow at residues 25-45 (RAVMASLTALVIGLGFGPFVI), 74-94 (MGGVLVLIGIAVSTLLWADWG), 97-117 (FIWIVLLVTLGYGAIGWVDDY), 134-154 (FFWQTVIGLFAAAYLAFSVSE), 190-210 (ISYPLGVFGFIILTYLVIVGS), 222-242 (GLVIMPVVLVGSALGVFAYVM), 259-279 (AGELLIFCSAMAGAGLAFLWF), 286-306 (VFMGDVGALALGGALGTIAVI), 311-331 (IVLFIMGGIFVAETVSVMLQV), and 366-386 (QVVVRFWVITMMLVLIGLSTL).

Belongs to the glycosyltransferase 4 family. MraY subfamily. It depends on Mg(2+) as a cofactor.

Its subcellular location is the cell inner membrane. The enzyme catalyses UDP-N-acetyl-alpha-D-muramoyl-L-alanyl-gamma-D-glutamyl-meso-2,6-diaminopimeloyl-D-alanyl-D-alanine + di-trans,octa-cis-undecaprenyl phosphate = di-trans,octa-cis-undecaprenyl diphospho-N-acetyl-alpha-D-muramoyl-L-alanyl-D-glutamyl-meso-2,6-diaminopimeloyl-D-alanyl-D-alanine + UMP. It participates in cell wall biogenesis; peptidoglycan biosynthesis. Catalyzes the initial step of the lipid cycle reactions in the biosynthesis of the cell wall peptidoglycan: transfers peptidoglycan precursor phospho-MurNAc-pentapeptide from UDP-MurNAc-pentapeptide onto the lipid carrier undecaprenyl phosphate, yielding undecaprenyl-pyrophosphoryl-MurNAc-pentapeptide, known as lipid I. The protein is Phospho-N-acetylmuramoyl-pentapeptide-transferase of Ralstonia pickettii (strain 12J).